The sequence spans 374 residues: Alanine racemase (374 aa).

Catalysis depends on K34, which acts as the Proton acceptor; specific for D-alanine. An N6-(pyridoxal phosphate)lysine modification is found at K34. Residue R147 coordinates substrate. Residue Y271 is the Proton acceptor; specific for L-alanine of the active site. M319 is a substrate binding site.

The protein belongs to the alanine racemase family. Requires pyridoxal 5'-phosphate as cofactor.

The enzyme catalyses L-alanine = D-alanine. It functions in the pathway amino-acid biosynthesis; D-alanine biosynthesis; D-alanine from L-alanine: step 1/1. In terms of biological role, catalyzes the interconversion of L-alanine and D-alanine. May also act on other amino acids. This Actinobacillus pleuropneumoniae serotype 5b (strain L20) protein is Alanine racemase (alr).